Here is a 373-residue protein sequence, read N- to C-terminus: Peroxisomal biogenesis factor 3 (373 aa).

The Cytoplasmic segment spans residues 1-15 (MLRSMWNFLKRHKKK). The tract at residues 1–45 (MLRSMWNFLKRHKKKCIFLGTVLGGVYILGKYGQKKIREIQEREA) is targeting to peroxisomes. The chain crosses the membrane as a helical span at residues 16 to 36 (CIFLGTVLGGVYILGKYGQKK). The Peroxisomal portion of the chain corresponds to 37–116 (IREIQEREAA…LKIISFTRSI (80 aa)). Residues 117–140 (VAVYSTCMLVVLLRVQLNIIGGYI) traverse the membrane as a helical segment. The segment at 120–136 (YSTCMLVVLLRVQLNII) is interaction with PEX19. Residues 141–373 (YLDNATVGKN…AFSTPQQLEK (233 aa)) are Cytoplasmic-facing.

This sequence belongs to the peroxin-3 family. In terms of assembly, interacts with PEX19.

Its subcellular location is the peroxisome membrane. Its function is as follows. Involved in peroxisome biosynthesis and integrity. Assembles membrane vesicles before the matrix proteins are translocated. As a docking factor for PEX19, is necessary for the import of peroxisomal membrane proteins in the peroxisomes. The sequence is that of Peroxisomal biogenesis factor 3 (PEX3) from Cricetulus longicaudatus (Long-tailed dwarf hamster).